The primary structure comprises 87 residues: Kappa 1b-bungarotoxin (87 aa).

An N-terminal signal peptide occupies residues 1–21 (MKTLLLTLVVVTIVCLDLGYT). 5 disulfides stabilise this stretch: cysteine 24/cysteine 42, cysteine 35/cysteine 63, cysteine 48/cysteine 52, cysteine 67/cysteine 79, and cysteine 80/cysteine 85.

The protein belongs to the three-finger toxin family. Long-chain subfamily. Kappa-neurotoxin sub-subfamily. As to quaternary structure, homo- and heterodimer; non-covalently linked. In terms of tissue distribution, expressed by the venom gland.

Its subcellular location is the secreted. Its function is as follows. Postsynaptic neurotoxin that binds and inhibits neuronal nicotinic acetylcholine receptors (nAChR) with high affinity (IC(50)&lt;100 nM). Is a selective, and slowly reversible antagonist of alpha-3/CHRNA3-containing and some alpha-4/CHRNA4-containing AChRs. In Bungarus candidus (Malayan krait), this protein is Kappa 1b-bungarotoxin.